Here is a 169-residue protein sequence, read N- to C-terminus: Macro domain-containing protein SCO6450 (169 aa).

The Macro domain occupies 1–169 (MTGITLVQGD…AYEAFAARLG (169 aa)).

It belongs to the MacroD-type family.

The polypeptide is Macro domain-containing protein SCO6450 (Streptomyces coelicolor (strain ATCC BAA-471 / A3(2) / M145)).